Consider the following 356-residue polypeptide: Protein RecA (356 aa).

G67 to T74 is a binding site for ATP.

This sequence belongs to the RecA family.

It is found in the cytoplasm. Its function is as follows. Can catalyze the hydrolysis of ATP in the presence of single-stranded DNA, the ATP-dependent uptake of single-stranded DNA by duplex DNA, and the ATP-dependent hybridization of homologous single-stranded DNAs. It interacts with LexA causing its activation and leading to its autocatalytic cleavage. This is Protein RecA from Yersinia pseudotuberculosis serotype I (strain IP32953).